We begin with the raw amino-acid sequence, 479 residues long: Cobyric acid synthase (479 aa).

Positions 250–442 (TRTVAVVAYP…LHGLFEDAAA (193 aa)) constitute a GATase cobBQ-type domain. Catalysis depends on Cys331, which acts as the Nucleophile. His434 is a catalytic residue.

It belongs to the CobB/CobQ family. CobQ subfamily.

It participates in cofactor biosynthesis; adenosylcobalamin biosynthesis. In terms of biological role, catalyzes amidations at positions B, D, E, and G on adenosylcobyrinic A,C-diamide. NH(2) groups are provided by glutamine, and one molecule of ATP is hydrogenolyzed for each amidation. The sequence is that of Cobyric acid synthase from Variovorax paradoxus (strain S110).